Reading from the N-terminus, the 266-residue chain is UPF0246 protein Pcryo_0542 (266 aa).

Belongs to the UPF0246 family.

In Psychrobacter cryohalolentis (strain ATCC BAA-1226 / DSM 17306 / VKM B-2378 / K5), this protein is UPF0246 protein Pcryo_0542.